The primary structure comprises 151 residues: 3-dehydroquinate dehydratase (151 aa).

The Proton acceptor role is filled by Tyr-24. 3 residues coordinate substrate: Asn-76, His-82, and Asp-89. His-102 (proton donor) is an active-site residue. Residues 103-104 and Arg-113 each bind substrate; that span reads VS.

The protein belongs to the type-II 3-dehydroquinase family. As to quaternary structure, homododecamer.

The catalysed reaction is 3-dehydroquinate = 3-dehydroshikimate + H2O. The protein operates within metabolic intermediate biosynthesis; chorismate biosynthesis; chorismate from D-erythrose 4-phosphate and phosphoenolpyruvate: step 3/7. Functionally, catalyzes a trans-dehydration via an enolate intermediate. The polypeptide is 3-dehydroquinate dehydratase (Rhodopseudomonas palustris (strain BisA53)).